Here is a 366-residue protein sequence, read N- to C-terminus: Methylthioribose-1-phosphate isomerase (366 aa).

The active-site Proton donor is the aspartate 260.

The protein belongs to the eIF-2B alpha/beta/delta subunits family. MtnA subfamily.

The protein localises to the cytoplasm. It is found in the nucleus. The enzyme catalyses 5-(methylsulfanyl)-alpha-D-ribose 1-phosphate = 5-(methylsulfanyl)-D-ribulose 1-phosphate. It functions in the pathway amino-acid biosynthesis; L-methionine biosynthesis via salvage pathway; L-methionine from S-methyl-5-thio-alpha-D-ribose 1-phosphate: step 1/6. In terms of biological role, catalyzes the interconversion of methylthioribose-1-phosphate (MTR-1-P) into methylthioribulose-1-phosphate (MTRu-1-P). This Caenorhabditis elegans protein is Methylthioribose-1-phosphate isomerase.